Here is a 436-residue protein sequence, read N- to C-terminus: MPIYIDRRLNPKDKSLGNRQRFLKRAREELKRTIKEQVRAGKITDVDAEHRVPMPARGTSEPTFRPDRSSGERGYILPGNKEFAPGDRLPKPGASGGEGGTGAGRGGSDDDFQFVLSREEVLDLFFEDLELPDMVKLNLKEAVAYRPRRAGFATSGSPTNINVGRTMRNSYGRRIALHRPKRQEVERLEAEIARLEVESDKLGGKQLEALRAELESLERKRRRIPYVDPIDIRFNRFEQQPLPNASAVMFCLMDVSSSMGEREKDLAKRFFVLLHLFLKRRYERIDIVFIRHTHEAREVDEETFFYSTQSGGTVVSTALEEMQRIIAERYPSREWNIYAAQASDGDNIAGDSERCASMLRDELMQLCQYYAYVEIIDERETEIFGATDNGTSLWRAYRTVGDQWPNFQMTRIARPADIYPVFRKLFARQSASPTRR.

Positions 53–110 (PMPARGTSEPTFRPDRSSGERGYILPGNKEFAPGDRLPKPGASGGEGGTGAGRGGSDD) are disordered. Positions 94–106 (ASGGEGGTGAGRG) are enriched in gly residues.

The protein belongs to the UPF0229 family.

The sequence is that of UPF0229 protein Meso_0256 from Chelativorans sp. (strain BNC1).